The following is a 392-amino-acid chain: Formate-dependent phosphoribosylglycinamide formyltransferase (392 aa).

Residues 15–16 and Glu-75 each bind N(1)-(5-phospho-beta-D-ribosyl)glycinamide; that span reads EL. Residues Arg-107, Lys-148, 153 to 158, 188 to 191, and Glu-196 each bind ATP; these read SSGKGQ and EEFL. Residues 112-302 enclose the ATP-grasp domain; the sequence is DLAAGELNLR…EFELHLRAVL (191 aa). The Mg(2+) site is built by Glu-261 and Glu-273. Residues Asp-280, Lys-350, and 357 to 358 each bind N(1)-(5-phospho-beta-D-ribosyl)glycinamide; that span reads RR.

This sequence belongs to the PurK/PurT family. Homodimer.

The enzyme catalyses N(1)-(5-phospho-beta-D-ribosyl)glycinamide + formate + ATP = N(2)-formyl-N(1)-(5-phospho-beta-D-ribosyl)glycinamide + ADP + phosphate + H(+). It functions in the pathway purine metabolism; IMP biosynthesis via de novo pathway; N(2)-formyl-N(1)-(5-phospho-D-ribosyl)glycinamide from N(1)-(5-phospho-D-ribosyl)glycinamide (formate route): step 1/1. In terms of biological role, involved in the de novo purine biosynthesis. Catalyzes the transfer of formate to 5-phospho-ribosyl-glycinamide (GAR), producing 5-phospho-ribosyl-N-formylglycinamide (FGAR). Formate is provided by PurU via hydrolysis of 10-formyl-tetrahydrofolate. This is Formate-dependent phosphoribosylglycinamide formyltransferase from Synechococcus sp. (strain CC9605).